Consider the following 566-residue polypeptide: Membrane protein insertase YidC (566 aa).

The chain crosses the membrane as a helical span at residues 7–27 (ILIVALAIVSYVMVLKWNQDY). The tract at residues 38 to 72 (ASSTTAPGLPDAPTGTSAANDDIPRAASDTTAPAE) is disordered. Helical transmembrane passes span 347–367 (LELT…FWLL), 373–393 (LVGN…GIFF), 443–463 (LGGC…YWVL), 474–494 (FMLW…PIIM), and 521–541 (PIIF…YWVV).

Belongs to the OXA1/ALB3/YidC family. Type 1 subfamily. As to quaternary structure, interacts with the Sec translocase complex via SecD. Specifically interacts with transmembrane segments of nascent integral membrane proteins during membrane integration.

Its subcellular location is the cell inner membrane. Its function is as follows. Required for the insertion and/or proper folding and/or complex formation of integral membrane proteins into the membrane. Involved in integration of membrane proteins that insert both dependently and independently of the Sec translocase complex, as well as at least some lipoproteins. Aids folding of multispanning membrane proteins. In Pseudomonas fluorescens (strain ATCC BAA-477 / NRRL B-23932 / Pf-5), this protein is Membrane protein insertase YidC.